Reading from the N-terminus, the 582-residue chain is 5-aminolevulinate synthase, erythroid-specific, mitochondrial (582 aa).

The transit peptide at 1–44 (MLLQRCPVLIRSPTAILGKMIKTHQFLIGIGRCPILATQGTTCS) directs the protein to the mitochondrion. Residue Arg-158 coordinates succinyl-CoA. Pyridoxal 5'-phosphate is bound by residues Cys-253 and Phe-254. Succinyl-CoA-binding residues include Ser-275 and Lys-294. Pyridoxal 5'-phosphate contacts are provided by Ser-327, His-355, and Thr-383. The active site involves Lys-386. The residue at position 386 (Lys-386) is an N6-(pyridoxal phosphate)lysine. Positions 415 and 416 each coordinate pyridoxal 5'-phosphate. Thr-503 serves as a coordination point for succinyl-CoA.

Belongs to the class-II pyridoxal-phosphate-dependent aminotransferase family. As to quaternary structure, homodimer. The cofactor is pyridoxal 5'-phosphate.

The protein localises to the mitochondrion inner membrane. The catalysed reaction is succinyl-CoA + glycine + H(+) = 5-aminolevulinate + CO2 + CoA. It participates in porphyrin-containing compound metabolism; protoporphyrin-IX biosynthesis; 5-aminolevulinate from glycine: step 1/1. Catalyzes the pyridoxal 5'-phosphate (PLP)-dependent condensation of succinyl-CoA and glycine to form aminolevulinic acid (ALA), with CoA and CO2 as by-products. Contributes significantly to heme formation during erythropoiesis. The chain is 5-aminolevulinate synthase, erythroid-specific, mitochondrial (ALAS2) from Delphinapterus leucas (Beluga whale).